A 485-amino-acid chain; its full sequence is Glutamyl-tRNA(Gln) amidotransferase subunit A (485 aa).

Active-site charge relay system residues include Lys79 and Ser154. The active-site Acyl-ester intermediate is the Ser178.

Belongs to the amidase family. GatA subfamily. Heterotrimer of A, B and C subunits.

The enzyme catalyses L-glutamyl-tRNA(Gln) + L-glutamine + ATP + H2O = L-glutaminyl-tRNA(Gln) + L-glutamate + ADP + phosphate + H(+). Its function is as follows. Allows the formation of correctly charged Gln-tRNA(Gln) through the transamidation of misacylated Glu-tRNA(Gln) in organisms which lack glutaminyl-tRNA synthetase. The reaction takes place in the presence of glutamine and ATP through an activated gamma-phospho-Glu-tRNA(Gln). The polypeptide is Glutamyl-tRNA(Gln) amidotransferase subunit A (Persephonella marina (strain DSM 14350 / EX-H1)).